Reading from the N-terminus, the 407-residue chain is Peptidase T (407 aa).

A Zn(2+)-binding site is contributed by histidine 81. The active site involves aspartate 83. Aspartate 142 contacts Zn(2+). Glutamate 176 acts as the Proton acceptor in catalysis. Zn(2+)-binding residues include glutamate 177, aspartate 199, and histidine 381.

The protein belongs to the peptidase M20B family. Requires Zn(2+) as cofactor.

The protein localises to the cytoplasm. It catalyses the reaction Release of the N-terminal residue from a tripeptide.. Cleaves the N-terminal amino acid of tripeptides. This chain is Peptidase T, found in Streptococcus pneumoniae (strain JJA).